Reading from the N-terminus, the 88-residue chain is Small ribosomal subunit protein uS15 (88 aa).

It belongs to the universal ribosomal protein uS15 family. In terms of assembly, part of the 30S ribosomal subunit. Forms a bridge to the 50S subunit in the 70S ribosome, contacting the 23S rRNA.

Its function is as follows. One of the primary rRNA binding proteins, it binds directly to 16S rRNA where it helps nucleate assembly of the platform of the 30S subunit by binding and bridging several RNA helices of the 16S rRNA. In terms of biological role, forms an intersubunit bridge (bridge B4) with the 23S rRNA of the 50S subunit in the ribosome. The protein is Small ribosomal subunit protein uS15 of Acidovorax sp. (strain JS42).